The primary structure comprises 83 residues: Large ribosomal subunit protein eL14 (83 aa).

This sequence belongs to the eukaryotic ribosomal protein eL14 family.

The chain is Large ribosomal subunit protein eL14 from Thermococcus gammatolerans (strain DSM 15229 / JCM 11827 / EJ3).